Reading from the N-terminus, the 185-residue chain is Elongation factor P (185 aa).

Belongs to the elongation factor P family.

It is found in the cytoplasm. Its pathway is protein biosynthesis; polypeptide chain elongation. In terms of biological role, involved in peptide bond synthesis. Stimulates efficient translation and peptide-bond synthesis on native or reconstituted 70S ribosomes in vitro. Probably functions indirectly by altering the affinity of the ribosome for aminoacyl-tRNA, thus increasing their reactivity as acceptors for peptidyl transferase. The protein is Elongation factor P of Bacillus cereus (strain B4264).